Reading from the N-terminus, the 442-residue chain is Proline--tRNA ligase (442 aa).

The protein belongs to the class-II aminoacyl-tRNA synthetase family. ProS type 2 subfamily. In terms of assembly, homodimer.

The protein resides in the cytoplasm. It catalyses the reaction tRNA(Pro) + L-proline + ATP = L-prolyl-tRNA(Pro) + AMP + diphosphate. In terms of biological role, catalyzes the attachment of proline to tRNA(Pro) in a two-step reaction: proline is first activated by ATP to form Pro-AMP and then transferred to the acceptor end of tRNA(Pro). The polypeptide is Proline--tRNA ligase (Brucella suis (strain ATCC 23445 / NCTC 10510)).